Here is a 381-residue protein sequence, read N- to C-terminus: N-acetyldiaminopimelate deacetylase (381 aa).

Residue aspartate 71 is part of the active site. The active-site Proton acceptor is the glutamate 130.

It belongs to the peptidase M20A family. N-acetyldiaminopimelate deacetylase subfamily.

It carries out the reaction N-acetyl-(2S,6S)-2,6-diaminopimelate + H2O = (2S,6S)-2,6-diaminopimelate + acetate. The protein operates within amino-acid biosynthesis; L-lysine biosynthesis via DAP pathway; LL-2,6-diaminopimelate from (S)-tetrahydrodipicolinate (acetylase route): step 3/3. Its function is as follows. Catalyzes the conversion of N-acetyl-diaminopimelate to diaminopimelate and acetate. This chain is N-acetyldiaminopimelate deacetylase, found in Ligilactobacillus salivarius (strain UCC118) (Lactobacillus salivarius).